The sequence spans 156 residues: Probable cyclic pyranopterin monophosphate synthase (156 aa).

Residues 73 to 75 (LCH) and 109 to 110 (ME) contribute to the substrate site. Residue Asp-124 is part of the active site.

Belongs to the MoaC family. As to quaternary structure, homohexamer; trimer of dimers.

The catalysed reaction is (8S)-3',8-cyclo-7,8-dihydroguanosine 5'-triphosphate = cyclic pyranopterin phosphate + diphosphate. Its pathway is cofactor biosynthesis; molybdopterin biosynthesis. In terms of biological role, catalyzes the conversion of (8S)-3',8-cyclo-7,8-dihydroguanosine 5'-triphosphate to cyclic pyranopterin monophosphate (cPMP). In Pyrococcus furiosus (strain ATCC 43587 / DSM 3638 / JCM 8422 / Vc1), this protein is Probable cyclic pyranopterin monophosphate synthase.